The sequence spans 325 residues: Zinc finger C2HC domain-containing protein 1A (325 aa).

Residues 15–44 (ELLPCKICGRTFFPVALKKHGPICQKTATK) form a C2HC/C3H-type 1 zinc finger. Zn(2+) contacts are provided by Cys19, Cys22, His34, and Cys38. Residues 43–83 (TKKRKTFDSSRQRAEGTDIPTVKPLKPRPEPPKKPSNWRRK) form a disordered region. The segment covering 48–58 (TFDSSRQRAEG) has biased composition (basic and acidic residues). Residues 118–147 (DYIQCPYCQRRFNENAADRHINFCKEQAAR) form a C2HC/C3H-type 2 zinc finger. Zn(2+)-binding residues include Cys122, Cys125, His137, and Cys141. Positions 150–260 (NKGKFSTDTK…NPAPGVLTNK (111 aa)) are disordered. 2 stretches are compositionally biased toward low complexity: residues 177–188 (SNSPGTASSGSS) and 197–216 (GKTVVGVPSGKVSSSSSSLG). A Phosphoserine modification is found at Ser223. Thr244 is modified (phosphothreonine). Residue Ser292 is modified to Phosphoserine.

This sequence belongs to the ZC2HC1 family. Zn(2+) is required as a cofactor.

This chain is Zinc finger C2HC domain-containing protein 1A (ZC2HC1A), found in Homo sapiens (Human).